Reading from the N-terminus, the 636-residue chain is ATP-dependent zinc metalloprotease FtsH (636 aa).

Over 1 to 12 (MKKLLENLSLWM) the chain is Cytoplasmic. Residues 13–33 (GIIILVTLLFGQVALNFGFGI) traverse the membrane as a helical segment. The Periplasmic segment spans residues 34–104 (RNEKIQFSEF…VASGDSFLGL (71 aa)). The helical transmembrane segment at 105–125 (LFNILISWFPMLLLIGVWIFF) threads the bilayer. Residues 126 to 636 (MKQMQAGGNK…ESDLDTGDKE (511 aa)) lie on the Cytoplasmic side of the membrane. Residue 197 to 204 (GPPGTGKT) coordinates ATP. Residue His-419 participates in Zn(2+) binding. Residue Glu-420 is part of the active site. Zn(2+)-binding residues include His-423 and Asp-497.

It in the central section; belongs to the AAA ATPase family. This sequence in the C-terminal section; belongs to the peptidase M41 family. As to quaternary structure, homohexamer. The cofactor is Zn(2+).

It localises to the cell inner membrane. Its function is as follows. Acts as a processive, ATP-dependent zinc metallopeptidase for both cytoplasmic and membrane proteins. Plays a role in the quality control of integral membrane proteins. This chain is ATP-dependent zinc metalloprotease FtsH, found in Neorickettsia risticii (strain Illinois).